Here is a 148-residue protein sequence, read N- to C-terminus: Deoxyuridine 5'-triphosphate nucleotidohydrolase (148 aa).

Substrate-binding positions include 67-69 (RSG), N80, 84-86 (LID), and M94.

This sequence belongs to the dUTPase family. Mg(2+) is required as a cofactor.

It carries out the reaction dUTP + H2O = dUMP + diphosphate + H(+). It functions in the pathway pyrimidine metabolism; dUMP biosynthesis; dUMP from dCTP (dUTP route): step 2/2. Functionally, this enzyme is involved in nucleotide metabolism: it produces dUMP, the immediate precursor of thymidine nucleotides and it decreases the intracellular concentration of dUTP so that uracil cannot be incorporated into DNA. The chain is Deoxyuridine 5'-triphosphate nucleotidohydrolase from Francisella philomiragia subsp. philomiragia (strain ATCC 25017 / CCUG 19701 / FSC 153 / O#319-036).